The sequence spans 116 residues: Peptidyl-tRNA hydrolase (116 aa).

The protein belongs to the PTH2 family.

It is found in the cytoplasm. It catalyses the reaction an N-acyl-L-alpha-aminoacyl-tRNA + H2O = an N-acyl-L-amino acid + a tRNA + H(+). In terms of biological role, the natural substrate for this enzyme may be peptidyl-tRNAs which drop off the ribosome during protein synthesis. This Methanococcus maripaludis (strain C6 / ATCC BAA-1332) protein is Peptidyl-tRNA hydrolase.